A 227-amino-acid polypeptide reads, in one-letter code: Putative methylase YubD (227 aa).

This sequence belongs to the N(4)/N(6)-methyltransferase family.

Its function is as follows. A putative beta subtype methylase whose recognition site is unknown. The chain is Putative methylase YubD (yubD) from Escherichia coli (strain K12).